Consider the following 603-residue polypeptide: Shugoshin (603 aa).

Residues 11–74 (HIQELQNILD…NVQLRSQVSL (64 aa)) adopt a coiled-coil conformation. Disordered stretches follow at residues 112-164 (ESLP…RSST) and 201-227 (NEIDTNNVNNDNLLSPIPHKKRKSNRR). Composition is skewed to low complexity over residues 146–157 (SVSTGSAHSTSS) and 201–214 (NEIDTNNVNNDNLL). Basic residues predominate over residues 218–227 (PHKKRKSNRR). Residues 304-325 (KQDILDETEKRDTAVNQKKKLE) are a coiled coil. Residues 331 to 399 (PVEELSSSKN…ESVDFDRPRR (69 aa)) are disordered. A compositionally biased stretch (basic residues) spans 362–376 (KVKHSMKSRKPKKNK). A coiled-coil region spans residues 431–451 (NIQDLQVKYKKSKKVLEKELK). Basic and acidic residues predominate over residues 455 to 467 (KAMKSPKKNEKTF). Disordered regions lie at residues 455 to 519 (KAMK…HSSF) and 583 to 603 (HNDTNKSSPKTYRSRSRKNKA). The span at 483-512 (RPSSTHSTSSVDAECSHNNSHSENINSSIN) shows a compositional bias: low complexity. The segment covering 583-593 (HNDTNKSSPKT) has biased composition (polar residues). Positions 594–603 (YRSRSRKNKA) are enriched in basic residues.

This sequence belongs to the shugoshin family.

Its subcellular location is the nucleus. The protein localises to the chromosome. It localises to the centromere. Plays a central role in chromosome cohesion during cell division by preventing premature dissociation of cohesin complex from centromeres after prophase, when most of cohesin complex dissociates from chromosomes arms. This chain is Shugoshin (SGO1), found in Candida glabrata (strain ATCC 2001 / BCRC 20586 / JCM 3761 / NBRC 0622 / NRRL Y-65 / CBS 138) (Yeast).